The following is a 291-amino-acid chain: Inactive dihydropteroate synthase 2 (291 aa).

One can recognise a Pterin-binding domain in the interval 15–272 (QLIMAIVNRT…EVVATRRVLE (258 aa)).

This sequence belongs to the DHPS family. As to quaternary structure, homodimer.

In terms of biological role, has very low affinity for the DHPS substrate 6-hydroxymethyl-7,8-dihydropterin-pyrophosphate, but can bind the inhibitor dapsone. Seems to lack dihydropteroate synthase activity, and does probably not function in folate metabolism. The protein is Inactive dihydropteroate synthase 2 (folP2) of Mycobacterium leprae (strain TN).